Here is a 470-residue protein sequence, read N- to C-terminus: Auxin transporter-like protein 3 (470 aa).

Topologically, residues 1–57 are cytoplasmic; it reads MAAEKIETVVAGNYLEMEREEENISGNKKSSTKTKLSNFFWHGGSVYDAWFSCASNQ. The chain crosses the membrane as a helical span at residues 58–75; the sequence is VAQVLLTLPYSFSQLGMM. Over 76–77 the chain is Extracellular; sequence SG. A helical transmembrane segment spans residues 78 to 98; that stretch reads ILFQLFYGLMGSWTAYLISVL. Topologically, residues 99–134 are cytoplasmic; it reads YVEYRTRKEREKFDFRNHVIQWFEVLDGLLGKHWRN. A helical membrane pass occupies residues 135-155; the sequence is LGLIFNCTFLLFGSVIQLIAC. Residues 156–170 are Extracellular-facing; it reads ASNIYYINDKLDKRT. Residues 171-191 traverse the membrane as a helical segment; sequence WTYIFGACCATTVFIPSFHNY. Residue R192 is a topological domain, cytoplasmic. The helical transmembrane segment at 193 to 213 threads the bilayer; it reads IWSFLGLAMTTYTSWYLTIAS. The Extracellular segment spans residues 214-230; it reads LLHGQAEDVKHSGPTTM. The chain crosses the membrane as a helical span at residues 231 to 251; sequence VLYFTGATNILYTFGGHAVTV. Residues 252–264 lie on the Cytoplasmic side of the membrane; the sequence is EIMHAMWKPQKFK. A helical membrane pass occupies residues 265 to 285; sequence AIYLLATIYVLTLTLPSASAV. The Extracellular segment spans residues 286-312; sequence YWAFGDKLLTHSNALSLLPKTGFRDTA. Residues 313–333 form a helical membrane-spanning segment; that stretch reads VILMLIHQFITFGFASTPLYF. The Cytoplasmic portion of the chain corresponds to 334–354; sequence VWEKLIGVHETKSMFKRAMAR. A helical membrane pass occupies residues 355 to 375; that stretch reads LPVVVPIWFLAIIFPFFGPIN. A topological domain (extracellular) is located at residue S376. Residues 377–397 form a helical membrane-spanning segment; the sequence is AVGSLLVSFTVYIIPALAHML. The Cytoplasmic portion of the chain corresponds to 398-426; sequence TFAPAPSRENAVERPPRVVGGWMGTYCIN. A helical membrane pass occupies residues 427 to 447; sequence IFVVVWVFVVGFGFGGWASMV. Residues 448–470 lie on the Extracellular side of the membrane; it reads NFVRQIDTFGLFTKCYQCPPHKP.

The protein belongs to the amino acid/polyamine transporter 2 family. Amino acid/auxin permease (AAAP) (TC 2.A.18.1) subfamily.

The protein resides in the cell membrane. In terms of biological role, carrier protein involved in proton-driven auxin influx. Mediates the formation of auxin gradient from developing leaves (site of auxin biosynthesis) to tips by contributing to the loading of auxin in vascular tissues and facilitating acropetal (base to tip) auxin transport within inner tissues of the root apex, and basipetal (tip to base) auxin transport within outer tissues of the root apex. This chain is Auxin transporter-like protein 3 (LAX3), found in Arabidopsis thaliana (Mouse-ear cress).